The primary structure comprises 129 residues: Small ribosomal subunit protein uS11 (129 aa).

Belongs to the universal ribosomal protein uS11 family. In terms of assembly, part of the 30S ribosomal subunit. Interacts with proteins S7 and S18. Binds to IF-3.

In terms of biological role, located on the platform of the 30S subunit, it bridges several disparate RNA helices of the 16S rRNA. Forms part of the Shine-Dalgarno cleft in the 70S ribosome. The protein is Small ribosomal subunit protein uS11 of Oleidesulfovibrio alaskensis (strain ATCC BAA-1058 / DSM 17464 / G20) (Desulfovibrio alaskensis).